The sequence spans 368 residues: G-protein coupled receptor 183-A (368 aa).

The Extracellular segment spans residues 1 to 27 (METTSANFTQNDSNVCTNLYNHRGWAQ). 2 N-linked (GlcNAc...) asparagine glycosylation sites follow: N7 and N11. Residues 28–53 (YFLPAMYSLICIVGLLGNVLALHVIW) traverse the membrane as a helical segment. Residues 54–73 (PNLKKINSTTLYSANLVVSD) lie on the Cytoplasmic side of the membrane. The chain crosses the membrane as a helical span at residues 74–91 (ILFSLALPLRVVYYARGF). The Extracellular segment spans residues 92-101 (DWPMGEGLCK). A disulfide bridge links C100 with C178. The chain crosses the membrane as a helical span at residues 102 to 123 (AVALLFYINMYAGVNFMTCLSV). Topologically, residues 124–145 (DRFIAVVLPLRFSRFRKVQKVR) are cytoplasmic. A helical membrane pass occupies residues 146–164 (YICGVVWVVVLMQTLPLLS). Over 165 to 189 (MPMTNIEQSGHITCMEYPNFEKIDN) the chain is Extracellular. A helical membrane pass occupies residues 190 to 212 (LPVMLIGAVVLGFGIPVITILVC). Residues 213–238 (YTALCLKLRHLAKSNKLTEKSGRSSK) are Cytoplasmic-facing. The chain crosses the membrane as a helical span at residues 239-262 (AIGVICTVILVFVVCYSPYHVDLL). Residues 263-282 (QYMIKKLRYDPDCSELHKFQ) are Extracellular-facing. The chain crosses the membrane as a helical span at residues 283 to 307 (ISLHITVCFMNLNSCLDPFIYFFAC). The Cytoplasmic segment spans residues 308–368 (KGYKKKVLKL…SSVLLNSLEQ (61 aa)).

Belongs to the G-protein coupled receptor 1 family.

It localises to the cell membrane. Its function is as follows. G-protein coupled receptor expressed in lymphocytes that acts as a chemotactic receptor for B-cells, T-cells, splenic dendritic cells, monocytes/macrophages and astrocytes. Receptor for oxysterol 7-alpha,25-dihydroxycholesterol (7-alpha,25-OHC) and other related oxysterols. Mediates cell positioning and movement of a number of cells by binding the 7-alpha,25-OHC ligand that forms a chemotactic gradient. Binding of 7-alpha,25-OHC mediates the correct localization of B-cells during humoral immune responses. The chain is G-protein coupled receptor 183-A (gpr183a) from Danio rerio (Zebrafish).